The primary structure comprises 310 residues: Putative methyltransferase mtx subunit H (310 aa).

This sequence belongs to the MtrH family. In terms of assembly, may be part of a complex composed of 3 subunits; MtxA, MtxH and MtxX.

This Methanosarcina barkeri (strain Fusaro / DSM 804) protein is Putative methyltransferase mtx subunit H (mtxH).